Reading from the N-terminus, the 142-residue chain is NCT transcriptional regulatory complex subunit B (142 aa).

This sequence belongs to the NC2 beta/DR1 family. In terms of assembly, forms the NCT transcriptional regulatory complex with nctA and mot1.

Its subcellular location is the nucleus. In terms of biological role, part of the NCT transcriptional regulatory complex that acts as a key regulator of ergosterol biosynthesis and the azole exporter cdr1B. The NCT complex binds the promoters of genes linked to azole susceptibility, and especially represses the expression of cdr1B transporter. This Aspergillus fumigatus (strain CBS 144.89 / FGSC A1163 / CEA10) (Neosartorya fumigata) protein is NCT transcriptional regulatory complex subunit B.